The following is a 306-amino-acid chain: Aspartate carbamoyltransferase catalytic subunit (306 aa).

Residues Arg51 and Thr52 each coordinate carbamoyl phosphate. Position 79 (Lys79) interacts with L-aspartate. Residues Arg101, His129, and Gln132 each contribute to the carbamoyl phosphate site. Residues Arg162 and Arg213 each contribute to the L-aspartate site. Carbamoyl phosphate-binding residues include Ala254 and Pro255.

Belongs to the aspartate/ornithine carbamoyltransferase superfamily. ATCase family. As to quaternary structure, heterododecamer (2C3:3R2) of six catalytic PyrB chains organized as two trimers (C3), and six regulatory PyrI chains organized as three dimers (R2).

It carries out the reaction carbamoyl phosphate + L-aspartate = N-carbamoyl-L-aspartate + phosphate + H(+). It participates in pyrimidine metabolism; UMP biosynthesis via de novo pathway; (S)-dihydroorotate from bicarbonate: step 2/3. In terms of biological role, catalyzes the condensation of carbamoyl phosphate and aspartate to form carbamoyl aspartate and inorganic phosphate, the committed step in the de novo pyrimidine nucleotide biosynthesis pathway. The chain is Aspartate carbamoyltransferase catalytic subunit from Bacillus thuringiensis (strain Al Hakam).